A 582-amino-acid chain; its full sequence is Inactive metallocarboxypeptidase ECM14 (582 aa).

The first 20 residues, 1–20 (MHILQVITGATLVSVPFVSA), serve as a signal peptide directing secretion. A propeptide spanning residues 21–172 (IPSSTSEFLP…QAVYESYPQP (152 aa)) is cleaved from the precursor. A Peptidase M14 domain is found at 200 to 522 (DYQPLSVIIP…NAVLVFGQFL (323 aa)). Positions 265 and 268 each coordinate Zn(2+). Substrate contacts are provided by residues 265–268 (HARE), Arg-323, and 340–341 (DR). A disulfide bridge connects residues Cys-334 and Cys-357. 2 N-linked (GlcNAc...) asparagine glycosylation sites follow: Asn-381 and Asn-387. Position 397 (His-397) interacts with Zn(2+). 398 to 399 (SY) is a substrate binding site. Over residues 561–571 (SNQLEDDDNEN) the composition is skewed to acidic residues. Positions 561 to 582 (SNQLEDDDNENDTLLGFRTQKV) are disordered. The N-linked (GlcNAc...) asparagine glycan is linked to Asn-571.

This sequence belongs to the peptidase M14 family. Requires Zn(2+) as cofactor.

It localises to the vacuole. Its subcellular location is the secreted. Inactive carboxypeptidase that may play a role in cell wall organization and biogenesis. The protein is Inactive metallocarboxypeptidase ECM14 (ECM14) of Coccidioides posadasii (strain C735) (Valley fever fungus).